We begin with the raw amino-acid sequence, 105 residues long: Nitrogen fixation nifHD region glnB-like protein 1 (105 aa).

This sequence belongs to the P(II) protein family.

Functionally, could be involved in the regulation of nitrogen fixation. This is Nitrogen fixation nifHD region glnB-like protein 1 (glnBI) from Methanococcus maripaludis (strain DSM 14266 / JCM 13030 / NBRC 101832 / S2 / LL).